The sequence spans 79 residues: Small ribosomal subunit protein bS18 (79 aa).

It belongs to the bacterial ribosomal protein bS18 family. As to quaternary structure, part of the 30S ribosomal subunit. Forms a tight heterodimer with protein bS6.

Binds as a heterodimer with protein bS6 to the central domain of the 16S rRNA, where it helps stabilize the platform of the 30S subunit. This is Small ribosomal subunit protein bS18 from Bacillus velezensis (strain DSM 23117 / BGSC 10A6 / LMG 26770 / FZB42) (Bacillus amyloliquefaciens subsp. plantarum).